A 62-amino-acid chain; its full sequence is Enterocin E-760 (62 aa).

The protein resides in the secreted. Its function is as follows. Bacteriocin active against the Gram-negative bacteria S.enteritidis, S.choleraesuis, S.typhimurium, S.gallinarum, E.coli O157:H7, Y.enterocolitica, C.freundii, K.pneumoniae, S.dysentriae, P.aeruginosa, P.mirabilis, M.morganii, C.jejuni and 20 other Campylobacter isolates, and the Gram-positive bacteria S.aureus, S.epidermidis and L.monocytogenes. The chain is Enterocin E-760 from Enterococcus sp.